The following is a 221-amino-acid chain: MFSFKVSRWMGLACFRSLVTSSPSIRQKKLMHKLQEEKAFREEMKIFREKIEDFREEMWTFRGKIRAFRGQILGFWEEERPFWEEEKSFWKEEKSFWEMEKSFREEEKTFWKKYRIFWKDDKAFWKEDNALWEKDRNLLQEDKALWEEEKALWVEERALLEEEKALWEDKTSLWEEENALWEEERAFWVESNGHIAREQMLEELHNANRGRRSLAFSRGRA.

Residues 129 to 168 are a coiled coil; the sequence is NALWEKDRNLLQEDKALWEEEKALWVEERALLEEEKALWE.

The polypeptide is Coiled-coil domain-containing protein 70 (CCDC70) (Macaca fascicularis (Crab-eating macaque)).